Reading from the N-terminus, the 160-residue chain is Large ribosomal subunit protein eL21A (160 aa).

Residue Lys32 forms a Glycyl lysine isopeptide (Lys-Gly) (interchain with G-Cter in ubiquitin) linkage.

Belongs to the eukaryotic ribosomal protein eL21 family. Component of the large ribosomal subunit (LSU). Mature yeast ribosomes consist of a small (40S) and a large (60S) subunit. The 40S small subunit contains 1 molecule of ribosomal RNA (18S rRNA) and 33 different proteins (encoded by 57 genes). The large 60S subunit contains 3 rRNA molecules (25S, 5.8S and 5S rRNA) and 46 different proteins (encoded by 81 genes).

Its subcellular location is the cytoplasm. Functionally, component of the ribosome, a large ribonucleoprotein complex responsible for the synthesis of proteins in the cell. The small ribosomal subunit (SSU) binds messenger RNAs (mRNAs) and translates the encoded message by selecting cognate aminoacyl-transfer RNA (tRNA) molecules. The large subunit (LSU) contains the ribosomal catalytic site termed the peptidyl transferase center (PTC), which catalyzes the formation of peptide bonds, thereby polymerizing the amino acids delivered by tRNAs into a polypeptide chain. The nascent polypeptides leave the ribosome through a tunnel in the LSU and interact with protein factors that function in enzymatic processing, targeting, and the membrane insertion of nascent chains at the exit of the ribosomal tunnel. This is Large ribosomal subunit protein eL21A from Saccharomyces cerevisiae (strain ATCC 204508 / S288c) (Baker's yeast).